The following is a 299-amino-acid chain: uncharacterized protein (299 aa).

The interval 1–38 (MSLDSNSDTEFELVPKFQTQPTRGDAPKSPELEEVSTV) is disordered.

It belongs to the calycin superfamily. Fatty-acid binding protein (FABP) family.

This is an uncharacterized protein from Caenorhabditis elegans.